The primary structure comprises 517 residues: Crotonobetaine/carnitine--CoA ligase (517 aa).

It belongs to the ATP-dependent AMP-binding enzyme family.

The catalysed reaction is 4-(trimethylamino)butanoate + ATP + CoA = 4-(trimethylamino)butanoyl-CoA + AMP + diphosphate. It catalyses the reaction crotonobetaine + ATP + CoA = crotonobetainyl-CoA + AMP + diphosphate. It carries out the reaction (R)-carnitine + ATP + CoA = (R)-carnitinyl-CoA + AMP + diphosphate. It functions in the pathway amine and polyamine metabolism; carnitine metabolism. Functionally, catalyzes the transfer of CoA to carnitine, generating the initial carnitinyl-CoA needed for the CaiB reaction cycle. Also has activity toward crotonobetaine and gamma-butyrobetaine. This chain is Crotonobetaine/carnitine--CoA ligase, found in Escherichia coli O9:H4 (strain HS).